Here is a 697-residue protein sequence, read N- to C-terminus: UBA domain-containing protein 7 (697 aa).

Positions 1–94 (MDDLLDFNFY…STPKSSNYDP (94 aa)) are disordered. The span at 13 to 32 (STPSNQNNYSNNNSRTPSYS) shows a compositional bias: low complexity. Over residues 62-77 (KKTDNKISLKELERQK) the composition is skewed to basic and acidic residues. Positions 81–92 (PDSNSTPKSSNY) are enriched in polar residues. The UBA domain maps to 181 to 221 (KLSSNEMYEKLRDLGFSDDQSRLALENSGSLEDAIEYILEK). Residues 306–346 (PEILPKTPIPKRKPHKVPMNEKVSEDRITTNQSRSGNDESS) form a disordered region. A compositionally biased stretch (basic and acidic residues) spans 323 to 333 (PMNEKVSEDRI). Residues 334-345 (TTNQSRSGNDES) are compositionally biased toward polar residues. One copy of the TPR repeat lies at 412–445 (VEEQQSTGNELFRKGDFSQAIEEFTNSLSQLPAK). The segment at 547–573 (ISSHSSESHSKRTTQQPKSTPNHTNIK) is disordered. The span at 559–573 (TTQQPKSTPNHTNIK) shows a compositional bias: polar residues. The J domain occupies 633 to 696 (CRWQKVSLSE…AWELFKQQND (64 aa)).

The sequence is that of UBA domain-containing protein 7 (ucp7) from Schizosaccharomyces pombe (strain 972 / ATCC 24843) (Fission yeast).